A 245-amino-acid chain; its full sequence is Glutathione S-transferase T1 (245 aa).

The region spanning methionine 2 to alanine 83 is the GST N-terminal domain. Residues serine 12–glutamine 13, glutamine 41–leucine 42, lysine 54–valine 55, and glutamate 67–serine 68 contribute to the glutathione site. The 144-residue stretch at aspartate 90–methionine 233 folds into the GST C-terminal domain. The Microbody targeting signal motif lies at serine 243–isoleucine 245.

This sequence belongs to the GST superfamily. Theta family.

It localises to the nucleus. The protein resides in the peroxisome. The enzyme catalyses RX + glutathione = an S-substituted glutathione + a halide anion + H(+). Its function is as follows. In vitro, possesses glutathione S-transferase activity toward 1-chloro-2,4-dinitrobenzene (CDNB) and p-nitrobenzyl chloride (pNBC), and glutathione peroxidase activity toward cumene hydroperoxide and linoleic acid-13-hydroperoxide. May be involved in the conjugation of reduced glutathione to a wide number of exogenous and endogenous hydrophobic electrophiles and have a detoxification role against certain herbicides. The chain is Glutathione S-transferase T1 (GSTT1) from Arabidopsis thaliana (Mouse-ear cress).